A 462-amino-acid chain; its full sequence is Argininosuccinate lyase (462 aa).

It belongs to the lyase 1 family. Argininosuccinate lyase subfamily.

Its subcellular location is the cytoplasm. It carries out the reaction 2-(N(omega)-L-arginino)succinate = fumarate + L-arginine. It participates in amino-acid biosynthesis; L-arginine biosynthesis; L-arginine from L-ornithine and carbamoyl phosphate: step 3/3. This is Argininosuccinate lyase from Ehrlichia ruminantium (strain Welgevonden).